Consider the following 254-residue polypeptide: 5'-nucleotidase SurE (254 aa).

A divalent metal cation contacts are provided by aspartate 8, aspartate 9, serine 39, and asparagine 91.

Belongs to the SurE nucleotidase family. It depends on a divalent metal cation as a cofactor.

The protein localises to the cytoplasm. It carries out the reaction a ribonucleoside 5'-phosphate + H2O = a ribonucleoside + phosphate. Functionally, nucleotidase that shows phosphatase activity on nucleoside 5'-monophosphates. This Pseudoalteromonas translucida (strain TAC 125) protein is 5'-nucleotidase SurE.